The following is a 308-amino-acid chain: Zinc transporter ZIP9 (308 aa).

A helical transmembrane segment spans residues 4 to 24 (FLSISLLSVAMLVGCYVAGII). N-linked (GlcNAc...) asparagine glycosylation is present at Asn29. 5 helical membrane passes run 35–55 (LKLV…AVIV), 107–127 (AYIG…DQIG), 147–167 (ITTT…LGAA), 177–197 (LIVF…LVSF), and 211–231 (HLLV…LGLS). N-linked (GlcNAc...) asparagine glycosylation occurs at Asn242. Transmembrane regions (helical) follow at residues 245–265 (GVAM…HVLP) and 287–307 (LEVA…IGHQ).

The protein belongs to the ZIP transporter (TC 2.A.5) family.

It localises to the golgi apparatus. It is found in the trans-Golgi network membrane. Its subcellular location is the cell membrane. The protein localises to the cytoplasm. The protein resides in the perinuclear region. It localises to the mitochondrion. It is found in the nucleus. The enzyme catalyses Zn(2+)(in) = Zn(2+)(out). Transports zinc ions across cell and organelle membranes into the cytoplasm and regulates intracellular zinc homeostasis. Participates in the zinc ions efflux out of the secretory compartments. Regulates intracellular zinc level, resulting in the enhancement of AKT1 and MAPK3/MAPK1 (Erk1/2) phosphorylation in response to the BCR activation. Also functions as a membrane androgen receptor that mediates, through a G protein, the non-classical androgen signaling pathway, characterized by the activation of MAPK3/MAPK1 (Erk1/2) and transcription factors CREB1 or ATF1. This pathway contributes to CLDN1 and CLDN5 expression and tight junction formation between adjacent Sertoli cells. Mediates androgen-induced vascular endothelial cell proliferation through activation of an inhibitory G protein leading to the AKT1 and MAPK3/MAPK1 (Erk1/2) activation which in turn modulate inhibition (phosphorylation) of GSK3B and CCND1 transcription. Moreover, has dual functions as a membrane-bound androgen receptor and as an androgen-dependent zinc transporter both of which are mediated through an inhibitory G protein (Gi) that mediates both MAP kinase and zinc signaling leading to the androgen-dependent apoptotic process. The polypeptide is Zinc transporter ZIP9 (Mus musculus (Mouse)).